The chain runs to 173 residues: Disulfide bond formation protein B (173 aa).

At 1 to 11 the chain is on the cytoplasmic side; that stretch reads MNALQWSFRAQ. The chain crosses the membrane as a helical span at residues 12 to 28; it reads CLTGFLFCTGLLAYAIF. The Periplasmic portion of the chain corresponds to 29–46; that stretch reads LQLHQGLEPCPLCIFQRI. An intrachain disulfide couples Cys38 to Cys41. A helical transmembrane segment spans residues 47–63; the sequence is AFAVLGILFLIAGLYNS. Topologically, residues 64-70 are cytoplasmic; sequence SNVYTRK. A helical transmembrane segment spans residues 71 to 88; that stretch reads AYGLLIFLTAIIGTGIAG. Over 89 to 145 the chain is Periplasmic; sequence RHVWVQLMPHNTISSCGSPLSFLSETMGPFEVFRTVLTGTSNCGNIDWRFLGLSMPM. Cys104 and Cys131 are oxidised to a cystine. A helical membrane pass occupies residues 146-164; sequence WSMFWFVALALLGLLVGFK. The Cytoplasmic segment spans residues 165-173; that stretch reads AERRKPLFS.

The protein belongs to the DsbB family.

The protein localises to the cell inner membrane. Its function is as follows. Required for disulfide bond formation in some periplasmic proteins. Acts by oxidizing the DsbA protein. The protein is Disulfide bond formation protein B of Xylella fastidiosa (strain Temecula1 / ATCC 700964).